We begin with the raw amino-acid sequence, 205 residues long: Myb-related protein 305 (205 aa).

2 consecutive HTH myb-type domains span residues 10 to 62 (DVEV…LNYL) and 63 to 117 (RPDV…QKHM). 2 DNA-binding regions (H-T-H motif) span residues 38-62 (WNSLARSAGLKRTGKSCRLRWLNYL) and 90-113 (WSKIAKTLPGRTDNEIKNYWRTRI).

As to expression, expressed only in flowers.

Its subcellular location is the nucleus. In terms of biological role, transcription factor. The chain is Myb-related protein 305 from Antirrhinum majus (Garden snapdragon).